The sequence spans 99 residues: 10 kDa heat shock protein, mitochondrial (99 aa).

The protein belongs to the GroES chaperonin family. Homoheptamer arranged in a ring structure. 2 heptameric Hsp10 rings interact with a Hsp60 tetradecamer in the structure of a back-to-back double heptameric ring to form the symmetrical football complex.

It localises to the mitochondrion matrix. Functionally, co-chaperonin implicated in mitochondrial protein import and macromolecular assembly. Together with Hsp60, facilitates the correct folding of imported proteins. May also prevent misfolding and promote the refolding and proper assembly of unfolded polypeptides generated under stress conditions in the mitochondrial matrix. The functional units of these chaperonins consist of heptameric rings of the large subunit Hsp60, which function as a back-to-back double ring. In a cyclic reaction, Hsp60 ring complexes bind one unfolded substrate protein per ring, followed by the binding of ATP and association with 2 heptameric rings of the co-chaperonin Hsp10. This leads to sequestration of the substrate protein in the inner cavity of Hsp60 where, for a certain period of time, it can fold undisturbed by other cell components. Synchronous hydrolysis of ATP in all Hsp60 subunits results in the dissociation of the chaperonin rings and the release of ADP and the folded substrate protein. The protein is 10 kDa heat shock protein, mitochondrial (hspe1) of Oryzias latipes (Japanese rice fish).